A 363-amino-acid polypeptide reads, in one-letter code: Anhydro-N-acetylmuramic acid kinase (363 aa).

10–17 (GTSLDGLD) is an ATP binding site.

Belongs to the anhydro-N-acetylmuramic acid kinase family.

The catalysed reaction is 1,6-anhydro-N-acetyl-beta-muramate + ATP + H2O = N-acetyl-D-muramate 6-phosphate + ADP + H(+). The protein operates within amino-sugar metabolism; 1,6-anhydro-N-acetylmuramate degradation. It functions in the pathway cell wall biogenesis; peptidoglycan recycling. Its function is as follows. Catalyzes the specific phosphorylation of 1,6-anhydro-N-acetylmuramic acid (anhMurNAc) with the simultaneous cleavage of the 1,6-anhydro ring, generating MurNAc-6-P. Is required for the utilization of anhMurNAc either imported from the medium or derived from its own cell wall murein, and thus plays a role in cell wall recycling. The polypeptide is Anhydro-N-acetylmuramic acid kinase (Pseudomonas fluorescens (strain Pf0-1)).